A 466-amino-acid chain; its full sequence is 3-isopropylmalate dehydratase large subunit (466 aa).

Residues Cys-347, Cys-407, and Cys-410 each contribute to the [4Fe-4S] cluster site.

It belongs to the aconitase/IPM isomerase family. LeuC type 1 subfamily. As to quaternary structure, heterodimer of LeuC and LeuD. Requires [4Fe-4S] cluster as cofactor.

The enzyme catalyses (2R,3S)-3-isopropylmalate = (2S)-2-isopropylmalate. It functions in the pathway amino-acid biosynthesis; L-leucine biosynthesis; L-leucine from 3-methyl-2-oxobutanoate: step 2/4. Its function is as follows. Catalyzes the isomerization between 2-isopropylmalate and 3-isopropylmalate, via the formation of 2-isopropylmaleate. In Escherichia coli O17:K52:H18 (strain UMN026 / ExPEC), this protein is 3-isopropylmalate dehydratase large subunit.